Consider the following 438-residue polypeptide: Polycomb protein eed-B (438 aa).

Residues M1–W70 form a disordered region. Positions S40–A57 are enriched in polar residues. WD repeat units lie at residues D88–L131, D139–H182, G185–I225, G231–A270, I301–E338, S356–A396, and K405–R438.

This sequence belongs to the WD repeat ESC family. Component of the prc2/eed-ezh2 complex. Can interact with ezh2, hdac1 and taf9. Interacts with yy1.

It is found in the nucleus. Its function is as follows. Polycomb group (PcG) protein. Component of the prc2/eed-ezh2 complex, which methylates 'Lys-9' and 'Lys-27' of histone H3, leading to transcriptional repression of the affected target gene. May play a role in neural induction. The protein is Polycomb protein eed-B (eed-b) of Xenopus laevis (African clawed frog).